The chain runs to 239 residues: Large ribosomal subunit protein uL2 (239 aa).

The disordered stretch occupies residues 203-239 (PFGGKEHHPGKPTTTSRRAPPGRKVGHIAARRTGRRK). Basic residues predominate over residues 222-239 (PPGRKVGHIAARRTGRRK).

It belongs to the universal ribosomal protein uL2 family. Part of the 50S ribosomal subunit. Forms a bridge to the 30S subunit in the 70S ribosome.

Its function is as follows. One of the primary rRNA binding proteins. Required for association of the 30S and 50S subunits to form the 70S ribosome, for tRNA binding and peptide bond formation. It has been suggested to have peptidyltransferase activity; this is somewhat controversial. Makes several contacts with the 16S rRNA in the 70S ribosome. The chain is Large ribosomal subunit protein uL2 from Pyrococcus abyssi (strain GE5 / Orsay).